An 83-amino-acid chain; its full sequence is Exodeoxyribonuclease 7 small subunit (83 aa).

This sequence belongs to the XseB family. In terms of assembly, heterooligomer composed of large and small subunits.

The protein localises to the cytoplasm. The enzyme catalyses Exonucleolytic cleavage in either 5'- to 3'- or 3'- to 5'-direction to yield nucleoside 5'-phosphates.. Functionally, bidirectionally degrades single-stranded DNA into large acid-insoluble oligonucleotides, which are then degraded further into small acid-soluble oligonucleotides. The sequence is that of Exodeoxyribonuclease 7 small subunit from Mesorhizobium japonicum (strain LMG 29417 / CECT 9101 / MAFF 303099) (Mesorhizobium loti (strain MAFF 303099)).